The sequence spans 452 residues: 3-phosphoshikimate 1-carboxyvinyltransferase (452 aa).

Over residues 1–17 (MSHAAAAKPATARKSQA) the composition is skewed to low complexity. Residues 1–26 (MSHAAAAKPATARKSQALSGTARVPG) form a disordered region. 3-phosphoshikimate is bound by residues Lys-28, Ser-29, and Arg-33. Phosphoenolpyruvate is bound at residue Lys-28. Residues Gly-100 and Arg-128 each contribute to the phosphoenolpyruvate site. 3-phosphoshikimate contacts are provided by Ser-174, Gln-176, Asp-327, and Lys-354. Gln-176 lines the phosphoenolpyruvate pocket. Catalysis depends on Asp-327, which acts as the Proton acceptor. Residues Arg-358 and Arg-409 each contribute to the phosphoenolpyruvate site.

Belongs to the EPSP synthase family. As to quaternary structure, monomer.

The protein resides in the cytoplasm. It catalyses the reaction 3-phosphoshikimate + phosphoenolpyruvate = 5-O-(1-carboxyvinyl)-3-phosphoshikimate + phosphate. It functions in the pathway metabolic intermediate biosynthesis; chorismate biosynthesis; chorismate from D-erythrose 4-phosphate and phosphoenolpyruvate: step 6/7. In terms of biological role, catalyzes the transfer of the enolpyruvyl moiety of phosphoenolpyruvate (PEP) to the 5-hydroxyl of shikimate-3-phosphate (S3P) to produce enolpyruvyl shikimate-3-phosphate and inorganic phosphate. This Mesorhizobium japonicum (strain LMG 29417 / CECT 9101 / MAFF 303099) (Mesorhizobium loti (strain MAFF 303099)) protein is 3-phosphoshikimate 1-carboxyvinyltransferase.